Consider the following 200-residue polypeptide: MASKLETLKANLEAAFGGLLLNLSEAIGELTIVVKASDYLNVATRLRDDRSLGFEQCVDLCGVDYQTYAEGAYDGPRFAAVLHLLSVQNNWRLRLRVFAPDDEVPILPSVVEIWNSVNWYEREAFDLYGIVFEGHPDLRRILTDYGFIGHPFRKDFPVSGYVEMRYDPEEKRVVYQPVTIEPREITPRVIREDRYGGLKH.

Belongs to the complex I 30 kDa subunit family. In terms of assembly, NDH-1 is composed of 14 different subunits. Subunits NuoB, C, D, E, F, and G constitute the peripheral sector of the complex.

It is found in the cell inner membrane. It carries out the reaction a quinone + NADH + 5 H(+)(in) = a quinol + NAD(+) + 4 H(+)(out). Its function is as follows. NDH-1 shuttles electrons from NADH, via FMN and iron-sulfur (Fe-S) centers, to quinones in the respiratory chain. The immediate electron acceptor for the enzyme in this species is believed to be ubiquinone. Couples the redox reaction to proton translocation (for every two electrons transferred, four hydrogen ions are translocated across the cytoplasmic membrane), and thus conserves the redox energy in a proton gradient. This Paraburkholderia phytofirmans (strain DSM 17436 / LMG 22146 / PsJN) (Burkholderia phytofirmans) protein is NADH-quinone oxidoreductase subunit C.